A 248-amino-acid polypeptide reads, in one-letter code: Triosephosphate isomerase (248 aa).

Residue 9-11 (NWK) participates in substrate binding. The active-site Electrophile is the histidine 94. Glutamate 166 functions as the Proton acceptor in the catalytic mechanism. Substrate-binding positions include glycine 172, serine 212, and 233–234 (GG).

Belongs to the triosephosphate isomerase family. Homodimer.

Its subcellular location is the cytoplasm. The catalysed reaction is D-glyceraldehyde 3-phosphate = dihydroxyacetone phosphate. It participates in carbohydrate biosynthesis; gluconeogenesis. Its pathway is carbohydrate degradation; glycolysis; D-glyceraldehyde 3-phosphate from glycerone phosphate: step 1/1. Its function is as follows. Involved in the gluconeogenesis. Catalyzes stereospecifically the conversion of dihydroxyacetone phosphate (DHAP) to D-glyceraldehyde-3-phosphate (G3P). The protein is Triosephosphate isomerase of Clostridium botulinum (strain Langeland / NCTC 10281 / Type F).